We begin with the raw amino-acid sequence, 161 residues long: Allophycocyanin beta chain (161 aa).

N71 is modified (N4-methylasparagine). C81 is a (2R,3E)-phycocyanobilin binding site.

This sequence belongs to the phycobiliprotein family. Heterodimer of an alpha and a beta chain. In terms of processing, contains one covalently linked phycocyanobilin chromophore.

It localises to the cellular thylakoid membrane. Light-harvesting photosynthetic bile pigment-protein from the phycobiliprotein complex. Allophycocyanin has a maximum absorption at approximately 650 nanometers. This Anabaena variabilis protein is Allophycocyanin beta chain (apcB).